Here is a 197-residue protein sequence, read N- to C-terminus: Putative peptidyl-prolyl cis-trans isomerase (197 aa).

The PPIase cyclophilin-type domain maps to 14–195 (NEIKVVMHTN…YDVVIESIDV (182 aa)).

Belongs to the cyclophilin-type PPIase family.

It catalyses the reaction [protein]-peptidylproline (omega=180) = [protein]-peptidylproline (omega=0). Functionally, PPIases accelerate the folding of proteins. It catalyzes the cis-trans isomerization of proline imidic peptide bonds in oligopeptides. This is Putative peptidyl-prolyl cis-trans isomerase from Staphylococcus epidermidis (strain ATCC 35984 / DSM 28319 / BCRC 17069 / CCUG 31568 / BM 3577 / RP62A).